Consider the following 859-residue polypeptide: Probable helicase A859L (859 aa).

The Helicase ATP-binding domain maps to 178-349 (YQELQRSGRA…KNRDLFGGVA (172 aa)). Residue 191–198 (MACRCGKT) coordinates ATP. The DEAH box signature appears at 298–301 (DECH). Positions 394-553 (QIIMALAYLK…RFYEHLLNPS (160 aa)) constitute a Helicase C-terminal domain.

Belongs to the asfivirus helicase A859L family.

The polypeptide is Probable helicase A859L (Ornithodoros (relapsing fever ticks)).